The following is a 168-amino-acid chain: Shikimate kinase (168 aa).

11-16 (GAGKTT) is an ATP binding site. Position 15 (T15) interacts with Mg(2+). Residues D33, R57, and G78 each contribute to the substrate site. R118 serves as a coordination point for ATP. Position 136 (R136) interacts with substrate. R153 lines the ATP pocket.

Belongs to the shikimate kinase family. As to quaternary structure, monomer. It depends on Mg(2+) as a cofactor.

It localises to the cytoplasm. The catalysed reaction is shikimate + ATP = 3-phosphoshikimate + ADP + H(+). It participates in metabolic intermediate biosynthesis; chorismate biosynthesis; chorismate from D-erythrose 4-phosphate and phosphoenolpyruvate: step 5/7. Functionally, catalyzes the specific phosphorylation of the 3-hydroxyl group of shikimic acid using ATP as a cosubstrate. The polypeptide is Shikimate kinase (Enterococcus faecalis (strain ATCC 700802 / V583)).